Reading from the N-terminus, the 205-residue chain is Imidazole glycerol phosphate synthase subunit HisH (205 aa).

One can recognise a Glutamine amidotransferase type-1 domain in the interval 1–205; it reads MIALVDYGGG…FFKMALGDKK (205 aa). The active-site Nucleophile is the C79. Active-site residues include H181 and E183.

Heterodimer of HisH and HisF.

It is found in the cytoplasm. It catalyses the reaction 5-[(5-phospho-1-deoxy-D-ribulos-1-ylimino)methylamino]-1-(5-phospho-beta-D-ribosyl)imidazole-4-carboxamide + L-glutamine = D-erythro-1-(imidazol-4-yl)glycerol 3-phosphate + 5-amino-1-(5-phospho-beta-D-ribosyl)imidazole-4-carboxamide + L-glutamate + H(+). It carries out the reaction L-glutamine + H2O = L-glutamate + NH4(+). The protein operates within amino-acid biosynthesis; L-histidine biosynthesis; L-histidine from 5-phospho-alpha-D-ribose 1-diphosphate: step 5/9. In terms of biological role, IGPS catalyzes the conversion of PRFAR and glutamine to IGP, AICAR and glutamate. The HisH subunit catalyzes the hydrolysis of glutamine to glutamate and ammonia as part of the synthesis of IGP and AICAR. The resulting ammonia molecule is channeled to the active site of HisF. In Dehalococcoides mccartyi (strain CBDB1), this protein is Imidazole glycerol phosphate synthase subunit HisH.